We begin with the raw amino-acid sequence, 568 residues long: Protein phosphatase 1 regulatory inhibitor subunit 16B (568 aa).

Residues 15-55 (EKVPTLERLRAAQKRRAQQLKKWAQYEQDLQHRKRKHERKR) are a coiled coil. Ser-69 is modified (phosphoserine). ANK repeat units follow at residues 100-129 (DGLT…NVNA), 133-162 (ELWT…DLLA), 228-257 (QGAT…RVDV), and 261-290 (DGWE…SLSA). The disordered stretch occupies residues 327-346 (RHKSSLSRRTSSAGSRGKVV). 3 positions are modified to phosphoserine: Ser-333, Ser-337, and Ser-350. Residues 333–342 (SRRTSSAGSR) are compositionally biased toward low complexity. Residues 373 to 404 (SASEDQRNSTYNGDIRETRTDQENKDPNPRLE) form a disordered region. Residues 386 to 404 (DIRETRTDQENKDPNPRLE) are compositionally biased toward basic and acidic residues. Ser-477 carries the phosphoserine modification. The tract at residues 504–525 (GSGVSRTGEGSSEGKAPLIGGR) is disordered. The stretch at 531–560 (SNGTSVYYTVTSGDPPLLKFKAPIEEMEEK) is one ANK 5 repeat. A lipid anchor (S-palmitoyl cysteine) is attached at Cys-564. Cysteine methyl ester is present on Cys-565. The S-farnesyl cysteine moiety is linked to residue Cys-565. A propeptide spans 566–568 (RIS) (removed in mature form).

Interacts with PPP1CA, PPP1CB and MSN. Interacts (via its fourth ankyrin repeat) with the mature dimeric form of RPSA/LAMR1. Interacts with EEF1A1. Interacts with PTEN. Interacts with ECE1. In terms of processing, phosphorylated by PKA and, after PKA priming, by GSK3B. Phosphorylation by GSK3B reduces its association with PP1C and enhances PP1C activity. Dephosphorylation by its associated PP1C results in enhanced association with PP1C, but reduced PP1C activity.

Its subcellular location is the cell membrane. It localises to the nucleus. The protein localises to the cell projection. In terms of biological role, regulator of protein phosphatase 1 (PP1) that acts as a positive regulator of pulmonary endothelial cell (EC) barrier function. Protects the endothelial barrier from lipopolysaccharide (LPS)-induced vascular leakage. Involved in the regulation of the PI3K/AKT signaling pathway. Involved in the regulation of angiogenesis and endothelial cell proliferation through the control of ECE1 dephosphorylation, trafficking and activity. Involved in the regulation of endothelial cell filopodia extension. May be a downstream target for TGF-beta1 signaling cascade in endothelial cells. Involved in PKA-mediated moesin dephosphorylation which is important in EC barrier protection against thrombin stimulation. Promotes the interaction of PPP1CA with RPSA/LAMR1 and in turn facilitates the dephosphorylation of RPSA/LAMR1. Involved in the dephosphorylation of EEF1A1. This Bos taurus (Bovine) protein is Protein phosphatase 1 regulatory inhibitor subunit 16B (PPP1R16B).